The following is a 397-amino-acid chain: Elongation factor Tu (397 aa).

The tr-type G domain occupies 10–207; sequence LPHVNVGTIG…TLDAYIPEPV (198 aa). Residues 19–26 form a G1 region; sequence GHVDHGKT. Residue 19–26 participates in GTP binding; sequence GHVDHGKT. Thr-26 serves as a coordination point for Mg(2+). The segment at 60 to 64 is G2; the sequence is GITIN. Residues 81-84 form a G3 region; it reads DCPG. GTP contacts are provided by residues 81–85 and 136–139; these read DCPGH and NKAD. The G4 stretch occupies residues 136–139; the sequence is NKAD. Positions 174-176 are G5; it reads SAR.

It belongs to the TRAFAC class translation factor GTPase superfamily. Classic translation factor GTPase family. EF-Tu/EF-1A subfamily. Monomer.

It localises to the cytoplasm. The catalysed reaction is GTP + H2O = GDP + phosphate + H(+). Its function is as follows. GTP hydrolase that promotes the GTP-dependent binding of aminoacyl-tRNA to the A-site of ribosomes during protein biosynthesis. This chain is Elongation factor Tu, found in Pseudomonas entomophila (strain L48).